Reading from the N-terminus, the 199-residue chain is Single-stranded DNA cytosine deaminase (199 aa).

The short motif at 1-30 (MDSLLKKQRQFLYQFKNVRWAKGRHETYLC) is the Bipartite nuclear localization signal element. Residues 2–26 (DSLLKKQRQFLYQFKNVRWAKGRHE) form an interaction with SUPT6H region. The region spanning 23 to 130 (GRHETYLCYV…KAEPEGLRRL (108 aa)) is the CMP/dCMP-type deaminase domain. Thr-27 bears the Phosphothreonine; by PKA mark. Ser-38 bears the Phosphoserine; by PKA mark. The segment at 39–42 (PTSF) is important for interaction with CTNNBL1. His-56 contacts Zn(2+). The Proton donor role is filled by Glu-58. Residues Cys-87 and Cys-90 each coordinate Zn(2+). Residues 88-116 (YDCARHVADFLRGYPNLSLRIFTARLYFC) are required for interaction with RNF126. The Nuclear export signal motif lies at 184–199 (LYEVDDLRDAFRTLGL).

This sequence belongs to the cytidine and deoxycytidylate deaminase family. Interacts with CTNNBL1; the interaction is important for the immunoglobulin switch activity of AICDA. Interacts (via its NLS) with KPNA1. Interacts with PKA/PRKACA and PRKAR1A/PKR1. Interacts with SUPT6H, TRIM28 and NCL. Directly interacts with MCM3AP; this interaction may favor AICDA recruitment to immunoglobulin variable region genes, hence promoting somatic hypermutations. Zn(2+) is required as a cofactor. Ser-38 is the major site whereas Thr-27 is the minor site of phosphorylation. Phosphorylation regulates its class-switch recombination activity. Post-translationally, probably monoubiquitinated on several residues by RNF126. Expressed in lymph nodes, spleen and thymus.

The protein resides in the nucleus. It is found in the cytoplasm. The catalysed reaction is a 2'-deoxycytidine in single-stranded DNA + H2O + H(+) = a 2'-deoxyuridine in single-stranded DNA + NH4(+). In terms of biological role, single-stranded DNA-specific cytidine deaminase. Involved in somatic hypermutation (SHM), gene conversion, and class-switch recombination (CSR) in B-lymphocytes by deaminating C to U during transcription of Ig-variable (V) and Ig-switch (S) region DNA. Required for several crucial steps of B-cell terminal differentiation necessary for efficient antibody responses. May also play a role in the epigenetic regulation of gene expression by participating in DNA demethylation. This chain is Single-stranded DNA cytosine deaminase (AICDA), found in Bos taurus (Bovine).